A 133-amino-acid chain; its full sequence is Interleukin-4 (133 aa).

The signal sequence occupies residues 1 to 24; the sequence is MGLTSQLIPTLVCLLACTSNFVHG. 3 cysteine pairs are disulfide-bonded: cysteine 27–cysteine 133, cysteine 48–cysteine 85, and cysteine 70–cysteine 105. A glycan (N-linked (GlcNAc...) asparagine) is linked at asparagine 62.

The protein belongs to the IL-4/IL-13 family.

Its subcellular location is the secreted. Functionally, participates in at least several B-cell activation processes as well as of other cell types. It is a costimulator of DNA-synthesis. It induces the expression of class II MHC molecules on resting B-cells. It enhances both secretion and cell surface expression of IgE and IgG1. It also regulates the expression of the low affinity Fc receptor for IgE (CD23) on both lymphocytes and monocytes. Positively regulates IL31RA expression in macrophages. Stimulates autophagy in dendritic cells by interfering with mTORC1 signaling and through the induction of RUFY4. In Sus scrofa (Pig), this protein is Interleukin-4 (IL4).